A 128-amino-acid chain; its full sequence is Small ribosomal subunit protein eS8 (128 aa).

It belongs to the eukaryotic ribosomal protein eS8 family. In terms of assembly, part of the 30S ribosomal subunit.

This is Small ribosomal subunit protein eS8 from Methanococcus maripaludis (strain C6 / ATCC BAA-1332).